Consider the following 156-residue polypeptide: 6,7-dimethyl-8-ribityllumazine synthase (156 aa).

5-amino-6-(D-ribitylamino)uracil is bound by residues tryptophan 22, 56–58 (AYE), and 80–82 (AVI). (2S)-2-hydroxy-3-oxobutyl phosphate is bound at residue 85–86 (DT). Histidine 88 (proton donor) is an active-site residue. Phenylalanine 113 is a 5-amino-6-(D-ribitylamino)uracil binding site. Arginine 127 serves as a coordination point for (2S)-2-hydroxy-3-oxobutyl phosphate.

The protein belongs to the DMRL synthase family.

It catalyses the reaction (2S)-2-hydroxy-3-oxobutyl phosphate + 5-amino-6-(D-ribitylamino)uracil = 6,7-dimethyl-8-(1-D-ribityl)lumazine + phosphate + 2 H2O + H(+). It participates in cofactor biosynthesis; riboflavin biosynthesis; riboflavin from 2-hydroxy-3-oxobutyl phosphate and 5-amino-6-(D-ribitylamino)uracil: step 1/2. Its function is as follows. Catalyzes the formation of 6,7-dimethyl-8-ribityllumazine by condensation of 5-amino-6-(D-ribitylamino)uracil with 3,4-dihydroxy-2-butanone 4-phosphate. This is the penultimate step in the biosynthesis of riboflavin. The protein is 6,7-dimethyl-8-ribityllumazine synthase of Deinococcus deserti (strain DSM 17065 / CIP 109153 / LMG 22923 / VCD115).